The chain runs to 131 residues: Guanyl-specific ribonuclease F1 (131 aa).

An N-terminal signal peptide occupies residues 1–25; that stretch reads MLFFKSIASLAALVSLAVASPIESR. The residue at position 26 (Q26) is a Pyrrolidone carboxylic acid. 2 disulfide bridges follow: C31/C127 and C49/C108. H65 is a catalytic residue. E83 (proton acceptor) is an active-site residue. The active-site Proton donor is H116.

It belongs to the ribonuclease N1/T1 family.

The enzyme catalyses [RNA] containing guanosine + H2O = an [RNA fragment]-3'-guanosine-3'-phosphate + a 5'-hydroxy-ribonucleotide-3'-[RNA fragment].. In Fusarium fujikuroi (Bakanae and foot rot disease fungus), this protein is Guanyl-specific ribonuclease F1.